The chain runs to 460 residues: Phosphoglucosamine mutase (460 aa).

The active-site Phosphoserine intermediate is S102. The Mg(2+) site is built by S102, D241, D243, and D245. S102 bears the Phosphoserine mark.

Belongs to the phosphohexose mutase family. The cofactor is Mg(2+). Post-translationally, activated by phosphorylation.

It catalyses the reaction alpha-D-glucosamine 1-phosphate = D-glucosamine 6-phosphate. In terms of biological role, catalyzes the conversion of glucosamine-6-phosphate to glucosamine-1-phosphate. The polypeptide is Phosphoglucosamine mutase (Verminephrobacter eiseniae (strain EF01-2)).